The sequence spans 879 residues: Phosphoinositide 3-kinase regulatory subunit 5 (879 aa).

The segment at 23–100 is heterodimerization; sequence SGSTDISSNW…APYIPETSDL (78 aa). Disordered stretches follow at residues 314–345 and 570–590; these read SLED…PKQD and SSST…PSPS. A compositionally biased stretch (acidic residues) spans 315 to 336; sequence LEDDVTEEDEEVDFEEVDDKDE. The span at 570–589 shows a compositional bias: polar residues; it reads SSSTNAPMTNAESPLKSPSP. Residues 651 to 751 are interaction with beta-gamma G protein dimers; sequence PILADMVLYY…WSNGEKVCTS (101 aa).

Heterodimer. Interacts with a catalytic subunit and with beta-gamma G protein dimers.

The protein resides in the nucleus. It is found in the cytoplasm. The protein localises to the cell membrane. Greatly activated by G gamma proteins. Regulatory subunit of the PI3K gamma complex. Required for recruitment of the catalytic subunit to the plasma membrane via interaction with beta-gamma G protein dimers. Required for G protein-mediated activation of PIK3CG. The protein is Phosphoinositide 3-kinase regulatory subunit 5 (pik3r5) of Xenopus laevis (African clawed frog).